The following is a 304-amino-acid chain: tRNA pseudouridine synthase B (304 aa).

Catalysis depends on aspartate 38, which acts as the Nucleophile.

Belongs to the pseudouridine synthase TruB family. Type 1 subfamily.

The catalysed reaction is uridine(55) in tRNA = pseudouridine(55) in tRNA. Functionally, responsible for synthesis of pseudouridine from uracil-55 in the psi GC loop of transfer RNAs. The protein is tRNA pseudouridine synthase B of Listeria innocua serovar 6a (strain ATCC BAA-680 / CLIP 11262).